Consider the following 304-residue polypeptide: MLFEQIAANKRKTVFIVIGFFIFVLMVGAAIGIIVWNNYLNGLILAAVIGAFYILIMVMTSSSVVMAMNRAKRITSKEQAPVLWDTVESMAMVASIPMPKVYIMNDLSLNAFSAGISPEKGAVAVTQGLLDNLERYELEGVIAHEVSHIRNYDIRLSTISIALVAVIAILSDLAMRMIFWGSVTGSRNNRKNDNNSGGGAQLIIYIVALVFVVLAPIIATAIQFALSRNREYLADASAIELTRNPDGLIQALQKVSGDTKKMKEVSASSESIYFSSPLKSKKDKPGIFDSHPPISSRIERLENM.

2 helical membrane-spanning segments follow: residues 14 to 34 and 39 to 59; these read VFIV…IGII and YLNG…IMVM. Residue His-144 coordinates Zn(2+). The active site involves Glu-145. His-148 contributes to the Zn(2+) binding site. The next 2 membrane-spanning stretches (helical) occupy residues 161-181 and 202-222; these read IALV…IFWG and LIIY…ATAI. Glu-231 serves as a coordination point for Zn(2+). The segment at 276-295 is disordered; sequence SPLKSKKDKPGIFDSHPPIS.

The protein belongs to the peptidase M48B family. The cofactor is Zn(2+).

It localises to the cell membrane. The sequence is that of Protease HtpX homolog from Listeria welshimeri serovar 6b (strain ATCC 35897 / DSM 20650 / CCUG 15529 / CIP 8149 / NCTC 11857 / SLCC 5334 / V8).